The following is a 424-amino-acid chain: MQGARAPRDQGRSPGRMSALGRSSVILLTYVLAATELTCLFMQFSIVPYLSRKLGLDSIAFGYLQTTFGVLQLLGGPVFGRFADQRGARAALTLSFLAALALYLLLAAASSPALPGVYLLFASRLPGALMHTLPAAQMVITDLSAPEERPAALGRLGLCFGVGVILGSLLGGTLVSAYGIQCPAILAALATLLGAVLSFTCIPASTKGAKTDAQAPLPGGPRASVFDLKAIASLLRLPDVPRIFLVKVASNCPTGLFMVMFSIISMDFFQLEAAQAGYLMSFFGLLQMVTQGLVIGQLSSHFSEEVLLRASVLVFIVVGLAMAWMSSVFHFCLLVPGLVFSLCTLNVVTDSMLIKAVSTSDTGTMLGLCASVQPLLRTLGPTVGGLLYRSFGVPVFGHVQVAINTLVLLVLWRKPMPQRKDKVR.

10 consecutive transmembrane segments (helical) span residues 26 to 46, 59 to 79, 90 to 110, 156 to 176, 184 to 204, 243 to 263, 276 to 296, 312 to 332, 334 to 354, and 391 to 411; these read ILLTYVLAATELTCLFMQFSI, IAFGYLQTTFGVLQLLGGPVF, AALTLSFLAALALYLLLAAAS, LGLCFGVGVILGSLLGGTLVS, AILAALATLLGAVLSFTCIPA, IFLVKVASNCPTGLFMVMFSI, AGYLMSFFGLLQMVTQGLVIG, VLVFIVVGLAMAWMSSVFHFC, LVPGLVFSLCTLNVVTDSMLI, and FGVPVFGHVQVAINTLVLLVL.

The protein belongs to the major facilitator (TC 2.A.1) superfamily. Organic cation transporter (TC 2.A.1.19) family. In terms of assembly, interacts with RNF167. Expressed at high levels in adult and fetal kidney and liver, and adult colon. Expressed in fetal renal proximal tubules (at protein level). Expressed at lower levels in heart, brain and lung.

The protein resides in the apical cell membrane. In terms of biological role, may act as a transporter of organic cations based on a proton efflux antiport mechanism. May play a role in the transport of chloroquine and quinidine-related compounds in kidney. Plays a role in the regulation of lipid metabolism. The protein is Solute carrier family 67 member A1 of Homo sapiens (Human).